Consider the following 131-residue polypeptide: Profilin-8 (131 aa).

A disulfide bond links Cys-13 and Cys-115. Positions 81 to 97 (AVIRGKKGSGGITVKKT) match the Involved in PIP2 interaction motif. Position 111 is a phosphothreonine (Thr-111).

The protein belongs to the profilin family. Occurs in many kinds of cells as a complex with monomeric actin in a 1:1 ratio. Post-translationally, phosphorylated by MAP kinases.

It is found in the cytoplasm. It localises to the cytoskeleton. Its function is as follows. Binds to actin and affects the structure of the cytoskeleton. At high concentrations, profilin prevents the polymerization of actin, whereas it enhances it at low concentrations. The chain is Profilin-8 from Zea mays (Maize).